The chain runs to 444 residues: Adenylosuccinate lyase (444 aa).

N(6)-(1,2-dicarboxyethyl)-AMP contacts are provided by residues 9 to 10 (RY), 73 to 75 (KHD), and 97 to 98 (TS). Residue H145 is the Proton donor/acceptor of the active site. Q219 serves as a coordination point for N(6)-(1,2-dicarboxyethyl)-AMP. The Proton donor/acceptor role is filled by S269. N(6)-(1,2-dicarboxyethyl)-AMP is bound by residues S270, 275–277 (KRN), N283, and 314–318 (SAERI).

This sequence belongs to the lyase 1 family. Adenylosuccinate lyase subfamily. Homotetramer. Residues from neighboring subunits contribute catalytic and substrate-binding residues to each active site.

The catalysed reaction is N(6)-(1,2-dicarboxyethyl)-AMP = fumarate + AMP. It carries out the reaction (2S)-2-[5-amino-1-(5-phospho-beta-D-ribosyl)imidazole-4-carboxamido]succinate = 5-amino-1-(5-phospho-beta-D-ribosyl)imidazole-4-carboxamide + fumarate. It participates in purine metabolism; AMP biosynthesis via de novo pathway; AMP from IMP: step 2/2. Its pathway is purine metabolism; IMP biosynthesis via de novo pathway; 5-amino-1-(5-phospho-D-ribosyl)imidazole-4-carboxamide from 5-amino-1-(5-phospho-D-ribosyl)imidazole-4-carboxylate: step 2/2. Its function is as follows. Catalyzes two reactions in de novo purine nucleotide biosynthesis. Catalyzes the breakdown of 5-aminoimidazole- (N-succinylocarboxamide) ribotide (SAICAR or 2-[5-amino-1-(5-phospho-beta-D-ribosyl)imidazole-4-carboxamido]succinate) to 5-aminoimidazole-4-carboxamide ribotide (AICAR or 5-amino-1-(5-phospho-beta-D-ribosyl)imidazole-4-carboxamide) and fumarate, and of adenylosuccinate (ADS or N(6)-(1,2-dicarboxyethyl)-AMP) to adenosine monophosphate (AMP) and fumarate. In Archaeoglobus fulgidus (strain ATCC 49558 / DSM 4304 / JCM 9628 / NBRC 100126 / VC-16), this protein is Adenylosuccinate lyase (purB).